The following is a 309-amino-acid chain: Olfactory receptor 4A47 (309 aa).

At 1–23 the chain is on the extracellular side; the sequence is MEPRKNVTDFVLLGFTQNPKEQK. A glycan (N-linked (GlcNAc...) asparagine) is linked at asparagine 6. Residues 24-47 traverse the membrane as a helical segment; sequence VLFVMFLLFYILTMVGNLLIVVTV. Residues 48 to 55 lie on the Cytoplasmic side of the membrane; the sequence is TVSETLGS. The chain crosses the membrane as a helical span at residues 56 to 77; that stretch reads PMYFFLAGLSFIDIIYSSSISP. At 78–98 the chain is on the extracellular side; it reads RLISGLFFGNNSISFQSCMAQ. Residue asparagine 87 is glycosylated (N-linked (GlcNAc...) asparagine). Cysteines 95 and 187 form a disulfide. The chain crosses the membrane as a helical span at residues 99–118; the sequence is LFIEHIFGGSEVFLLLVMAY. At 119-137 the chain is on the cytoplasmic side; it reads DCYVAICKPLHYLVIMRQW. A helical membrane pass occupies residues 138–156; the sequence is VCVVLLVVSWVGGFLHSVF. Residues 157-193 are Extracellular-facing; sequence QLSIIYGLPFCGPNVIDHFFCDMYPLLKLVCTDTHAI. The helical transmembrane segment at 194 to 217 threads the bilayer; it reads GLLVVANGGLACTIVFLLLLISYG. Residues 218–233 lie on the Cytoplasmic side of the membrane; it reads VILHSLKNLSQKGRQK. Residues 234 to 256 form a helical membrane-spanning segment; sequence ALSTCSSHMTVVVFFFVPCIFMY. Residues 257 to 267 are Extracellular-facing; that stretch reads ARPARTFPIDK. Residues 268-287 form a helical membrane-spanning segment; it reads SVSVFYTVITPMLNPLIYTL. Residues 288–309 are Cytoplasmic-facing; sequence RNSEMTSAMKKLWRRDLISSST.

It belongs to the G-protein coupled receptor 1 family.

Its subcellular location is the cell membrane. In terms of biological role, odorant receptor. The sequence is that of Olfactory receptor 4A47 (OR4A47) from Homo sapiens (Human).